A 264-amino-acid polypeptide reads, in one-letter code: tRNA pseudouridine synthase A (264 aa).

The active-site Nucleophile is the D51. Y109 provides a ligand contact to substrate.

The protein belongs to the tRNA pseudouridine synthase TruA family. Homodimer.

It carries out the reaction uridine(38/39/40) in tRNA = pseudouridine(38/39/40) in tRNA. In terms of biological role, formation of pseudouridine at positions 38, 39 and 40 in the anticodon stem and loop of transfer RNAs. This Polaromonas naphthalenivorans (strain CJ2) protein is tRNA pseudouridine synthase A.